The sequence spans 141 residues: Galactose-6-phosphate isomerase subunit LacA (141 aa).

Belongs to the LacAB/RpiB family. In terms of assembly, heteromultimeric protein consisting of LacA and LacB.

It catalyses the reaction aldehydo-D-galactose 6-phosphate = keto-D-tagatose 6-phosphate. The protein operates within carbohydrate metabolism; D-galactose 6-phosphate degradation; D-tagatose 6-phosphate from D-galactose 6-phosphate: step 1/1. The protein is Galactose-6-phosphate isomerase subunit LacA of Streptococcus pneumoniae (strain P1031).